The sequence spans 630 residues: Probable potassium transport system protein Kup 1 (630 aa).

12 helical membrane passes run 15–35 (LLAM…TSPL), 58–78 (LISL…VLFL), 104–124 (TAIL…DAMI), 142–162 (PALS…LFAV), 173–193 (FFGP…FMHI), 208–228 (AVAF…AVFL), 252–272 (WFTV…AFVL), 290–310 (ALLP…QAVI), 342–362 (IYLP…VFIF), 368–388 (LATA…VLAF), 399–419 (AWWA…FLGA), and 424–444 (IHDG…IMWT).

Belongs to the HAK/KUP transporter (TC 2.A.72) family.

The protein resides in the cell inner membrane. The catalysed reaction is K(+)(in) + H(+)(in) = K(+)(out) + H(+)(out). Functionally, transport of potassium into the cell. Likely operates as a K(+):H(+) symporter. This Sinorhizobium medicae (strain WSM419) (Ensifer medicae) protein is Probable potassium transport system protein Kup 1.